The chain runs to 165 residues: MTQVTFKHNPVTLVGTERKVGDKAPNFTVVNRDLEEVTLHDYDGKVRLISVVPSIDTSVCSTQTRKFNEEASNLDNTVVLTISVDLPFAQKKWCAAEGLPNAITLSDHRDLSFGEAYGVIMKELRLLARSVFVVNAKGEIVYTEVVPEGSDHPNYEAAIEAAKKA.

The Thioredoxin domain occupies 18–164 (RKVGDKAPNF…YEAAIEAAKK (147 aa)). Cysteine 60 serves as the catalytic Cysteine sulfenic acid (-SOH) intermediate. A disulfide bridge connects residues cysteine 60 and cysteine 94.

Belongs to the peroxiredoxin family. Tpx subfamily. As to quaternary structure, homodimer.

It catalyses the reaction a hydroperoxide + [thioredoxin]-dithiol = an alcohol + [thioredoxin]-disulfide + H2O. Thiol-specific peroxidase that catalyzes the reduction of hydrogen peroxide and organic hydroperoxides to water and alcohols, respectively. Plays a role in cell protection against oxidative stress by detoxifying peroxides. The chain is Thiol peroxidase from Listeria innocua serovar 6a (strain ATCC BAA-680 / CLIP 11262).